A 485-amino-acid chain; its full sequence is Glutamyl-tRNA(Gln) amidotransferase subunit A (485 aa).

Residues lysine 79 and serine 154 each act as charge relay system in the active site. Residue serine 178 is the Acyl-ester intermediate of the active site.

This sequence belongs to the amidase family. GatA subfamily. Heterotrimer of A, B and C subunits.

It carries out the reaction L-glutamyl-tRNA(Gln) + L-glutamine + ATP + H2O = L-glutaminyl-tRNA(Gln) + L-glutamate + ADP + phosphate + H(+). In terms of biological role, allows the formation of correctly charged Gln-tRNA(Gln) through the transamidation of misacylated Glu-tRNA(Gln) in organisms which lack glutaminyl-tRNA synthetase. The reaction takes place in the presence of glutamine and ATP through an activated gamma-phospho-Glu-tRNA(Gln). This chain is Glutamyl-tRNA(Gln) amidotransferase subunit A, found in Bacillus licheniformis (strain ATCC 14580 / DSM 13 / JCM 2505 / CCUG 7422 / NBRC 12200 / NCIMB 9375 / NCTC 10341 / NRRL NRS-1264 / Gibson 46).